Here is a 201-residue protein sequence, read N- to C-terminus: Large ribosomal subunit protein uL4 (201 aa).

The tract at residues 44–71 (RAQKTRAEVSGSGKKPWRQKGTGRARSG) is disordered.

This sequence belongs to the universal ribosomal protein uL4 family. As to quaternary structure, part of the 50S ribosomal subunit.

One of the primary rRNA binding proteins, this protein initially binds near the 5'-end of the 23S rRNA. It is important during the early stages of 50S assembly. It makes multiple contacts with different domains of the 23S rRNA in the assembled 50S subunit and ribosome. In terms of biological role, forms part of the polypeptide exit tunnel. The sequence is that of Large ribosomal subunit protein uL4 from Actinobacillus succinogenes (strain ATCC 55618 / DSM 22257 / CCUG 43843 / 130Z).